We begin with the raw amino-acid sequence, 403 residues long: Arginine deiminase (403 aa).

Cys-388 acts as the Amidino-cysteine intermediate in catalysis.

This sequence belongs to the arginine deiminase family.

The protein localises to the cytoplasm. The catalysed reaction is L-arginine + H2O = L-citrulline + NH4(+). Its pathway is amino-acid degradation; L-arginine degradation via ADI pathway; carbamoyl phosphate from L-arginine: step 1/2. The polypeptide is Arginine deiminase (Mycoplasma capricolum subsp. capricolum (strain California kid / ATCC 27343 / NCTC 10154)).